A 398-amino-acid chain; its full sequence is 8-amino-7-oxononanoate synthase (398 aa).

Arg-26 contacts substrate. Residue 113–114 participates in pyridoxal 5'-phosphate binding; it reads GF. His-138 serves as a coordination point for substrate. Residues Ser-181, His-209, and Thr-238 each contribute to the pyridoxal 5'-phosphate site. The residue at position 241 (Lys-241) is an N6-(pyridoxal phosphate)lysine. Thr-355 contributes to the substrate binding site.

This sequence belongs to the class-II pyridoxal-phosphate-dependent aminotransferase family. BioF subfamily. In terms of assembly, homodimer. Pyridoxal 5'-phosphate serves as cofactor.

It carries out the reaction 6-carboxyhexanoyl-[ACP] + L-alanine + H(+) = (8S)-8-amino-7-oxononanoate + holo-[ACP] + CO2. It participates in cofactor biosynthesis; biotin biosynthesis. In terms of biological role, catalyzes the decarboxylative condensation of pimeloyl-[acyl-carrier protein] and L-alanine to produce 8-amino-7-oxononanoate (AON), [acyl-carrier protein], and carbon dioxide. The protein is 8-amino-7-oxononanoate synthase of Aeromonas salmonicida (strain A449).